The following is a 431-amino-acid chain: Glutamate-1-semialdehyde 2,1-aminomutase (431 aa).

Lysine 269 is subject to N6-(pyridoxal phosphate)lysine.

The protein belongs to the class-III pyridoxal-phosphate-dependent aminotransferase family. HemL subfamily. In terms of assembly, homodimer. Pyridoxal 5'-phosphate is required as a cofactor.

Its subcellular location is the cytoplasm. The catalysed reaction is (S)-4-amino-5-oxopentanoate = 5-aminolevulinate. It functions in the pathway porphyrin-containing compound metabolism; protoporphyrin-IX biosynthesis; 5-aminolevulinate from L-glutamyl-tRNA(Glu): step 2/2. Its pathway is porphyrin-containing compound metabolism; chlorophyll biosynthesis. The chain is Glutamate-1-semialdehyde 2,1-aminomutase from Chlorobaculum parvum (strain DSM 263 / NCIMB 8327) (Chlorobium vibrioforme subsp. thiosulfatophilum).